A 389-amino-acid chain; its full sequence is Cobalt-precorrin-5B C(1)-methyltransferase (389 aa).

The interval 1–25 (MESRADHAVPADEGHGATEPPRGRD) is disordered.

This sequence belongs to the CbiD family.

The enzyme catalyses Co-precorrin-5B + S-adenosyl-L-methionine = Co-precorrin-6A + S-adenosyl-L-homocysteine. The protein operates within cofactor biosynthesis; adenosylcobalamin biosynthesis; cob(II)yrinate a,c-diamide from sirohydrochlorin (anaerobic route): step 6/10. Its function is as follows. Catalyzes the methylation of C-1 in cobalt-precorrin-5B to form cobalt-precorrin-6A. In Nitratidesulfovibrio vulgaris (strain ATCC 29579 / DSM 644 / CCUG 34227 / NCIMB 8303 / VKM B-1760 / Hildenborough) (Desulfovibrio vulgaris), this protein is Cobalt-precorrin-5B C(1)-methyltransferase.